A 263-amino-acid chain; its full sequence is uncharacterized protein (263 aa).

The N-terminal stretch at 1–22 (MEYLKRLALFISVIILTIFIMG) is a signal peptide. Residue Cys23 is the site of N-palmitoyl cysteine attachment. Cys23 carries the S-diacylglycerol cysteine lipid modification.

It belongs to the staphylococcal tandem lipoprotein family.

Its subcellular location is the cell membrane. This is an uncharacterized protein from Staphylococcus aureus (strain MSSA476).